Here is a 288-residue protein sequence, read N- to C-terminus: Eukaryotic translation initiation factor 3 subunit G (288 aa).

A disordered region spans residues 1–33 (MSRVANNRDWADDEDLEDSNELPQSTTTTNKDG). Positions 11–20 (ADDEDLEDSN) are enriched in acidic residues. The segment covering 21–33 (ELPQSTTTTNKDG) has biased composition (polar residues). In terms of domain architecture, RRM spans 208–286 (ATLRVTNVSE…LILRVEFAKK (79 aa)).

The protein belongs to the eIF-3 subunit G family. In terms of assembly, component of the eukaryotic translation initiation factor 3 (eIF-3) complex.

Its subcellular location is the cytoplasm. In terms of biological role, RNA-binding component of the eukaryotic translation initiation factor 3 (eIF-3) complex, which is involved in protein synthesis of a specialized repertoire of mRNAs and, together with other initiation factors, stimulates binding of mRNA and methionyl-tRNAi to the 40S ribosome. The eIF-3 complex specifically targets and initiates translation of a subset of mRNAs involved in cell proliferation. This subunit can bind 18S rRNA. This Sclerotinia sclerotiorum (strain ATCC 18683 / 1980 / Ss-1) (White mold) protein is Eukaryotic translation initiation factor 3 subunit G (tif35).